Consider the following 368-residue polypeptide: Zinc finger protein 24 (368 aa).

Lys22 participates in a covalent cross-link: Glycyl lysine isopeptide (Lys-Gly) (interchain with G-Cter in SUMO2). Lys27 is covalently cross-linked (Glycyl lysine isopeptide (Lys-Gly) (interchain with G-Cter in SUMO1); alternate). A Glycyl lysine isopeptide (Lys-Gly) (interchain with G-Cter in SUMO2); alternate cross-link involves residue Lys27. An SCAN box domain is found at 52–134; the sequence is RQRFRQFGYQ…TVLEDLESEL (83 aa). A phosphoserine mark is found at Ser132 and Ser142. Glycyl lysine isopeptide (Lys-Gly) (interchain with G-Cter in SUMO2) cross-links involve residues Lys147, Lys177, and Lys236. The C2H2-type 1 zinc-finger motif lies at 251 to 273; sequence HICDECGKHFSQGSALILHQRIH. A necessary and sufficient for nuclear localization region spans residues 251–301; sequence HICDECGKHFSQGSALILHQRIHSGEKPYGCVECGKAFSRSSILVQHQRVH. Phosphoserine is present on Ser274. Residues Lys277 and Lys286 each participate in a glycyl lysine isopeptide (Lys-Gly) (interchain with G-Cter in SUMO2) cross-link. C2H2-type zinc fingers lie at residues 279–301, 307–329, and 335–357; these read YGCV…QRVH, YKCL…QRIH, and YECV…QRRH. Ser292 bears the Phosphoserine mark. At Tyr335 the chain carries Phosphotyrosine. Glycyl lysine isopeptide (Lys-Gly) (interchain with G-Cter in SUMO2) cross-links involve residues Lys361 and Lys367.

The protein belongs to the krueppel C2H2-type zinc-finger protein family. Sumoylated. Expressed in many tissues except in heart.

Its subcellular location is the nucleus. Functionally, transcription factor required for myelination of differentiated oligodendrocytes. Required for the conversion of oligodendrocytes from the premyelinating to the myelinating state. In the developing central nervous system (CNS), involved in the maintenance in the progenitor stage by promoting the cell cycle. Specifically binds to the 5'-TCAT-3' DNA sequence. Has transcription repressor activity in vitro. The polypeptide is Zinc finger protein 24 (ZNF24) (Homo sapiens (Human)).